The following is a 514-amino-acid chain: Putative fumarate hydratase class I (514 aa).

Residues cysteine 62, cysteine 187, and cysteine 274 each coordinate [4Fe-4S] cluster.

It belongs to the class-I fumarase family. Homodimer. [4Fe-4S] cluster serves as cofactor.

The catalysed reaction is (S)-malate = fumarate + H2O. Its pathway is carbohydrate metabolism; tricarboxylic acid cycle; (S)-malate from fumarate: step 1/1. Functionally, catalyzes the reversible hydration of fumarate to (S)-malate. In Geobacillus stearothermophilus (Bacillus stearothermophilus), this protein is Putative fumarate hydratase class I (fumA).